The sequence spans 217 residues: Uracil-DNA glycosylase (217 aa).

The active-site Proton acceptor is aspartate 62.

Belongs to the uracil-DNA glycosylase (UDG) superfamily. UNG family.

It localises to the cytoplasm. It carries out the reaction Hydrolyzes single-stranded DNA or mismatched double-stranded DNA and polynucleotides, releasing free uracil.. In terms of biological role, excises uracil residues from the DNA which can arise as a result of misincorporation of dUMP residues by DNA polymerase or due to deamination of cytosine. In Streptococcus pneumoniae serotype 19F (strain G54), this protein is Uracil-DNA glycosylase.